The primary structure comprises 635 residues: Glutamyl-tRNA(Gln) amidotransferase subunit E (635 aa).

The tract at residues 415-437 is disordered; that stretch reads LPDGNTEYMRPLPGKARMYPETD.

The protein belongs to the GatB/GatE family. GatE subfamily. Heterodimer of GatD and GatE.

It carries out the reaction L-glutamyl-tRNA(Gln) + L-glutamine + ATP + H2O = L-glutaminyl-tRNA(Gln) + L-glutamate + ADP + phosphate + H(+). Its function is as follows. Allows the formation of correctly charged Gln-tRNA(Gln) through the transamidation of misacylated Glu-tRNA(Gln) in organisms which lack glutaminyl-tRNA synthetase. The reaction takes place in the presence of glutamine and ATP through an activated gamma-phospho-Glu-tRNA(Gln). The GatDE system is specific for glutamate and does not act on aspartate. The polypeptide is Glutamyl-tRNA(Gln) amidotransferase subunit E (Pyrococcus horikoshii (strain ATCC 700860 / DSM 12428 / JCM 9974 / NBRC 100139 / OT-3)).